The chain runs to 180 residues: ATP-dependent protease subunit HslV (180 aa).

Residue Thr7 is part of the active site. Na(+)-binding residues include Ala163, Cys166, and Thr169.

This sequence belongs to the peptidase T1B family. HslV subfamily. In terms of assembly, a double ring-shaped homohexamer of HslV is capped on each side by a ring-shaped HslU homohexamer. The assembly of the HslU/HslV complex is dependent on binding of ATP.

The protein resides in the cytoplasm. The catalysed reaction is ATP-dependent cleavage of peptide bonds with broad specificity.. Allosterically activated by HslU binding. Protease subunit of a proteasome-like degradation complex believed to be a general protein degrading machinery. In Cytophaga hutchinsonii (strain ATCC 33406 / DSM 1761 / CIP 103989 / NBRC 15051 / NCIMB 9469 / D465), this protein is ATP-dependent protease subunit HslV.